The following is a 174-amino-acid chain: CASP-like protein 4D2 (174 aa).

At 1-14 (MAPPPPSPPPVSLK) the chain is on the cytoplasmic side. The helical transmembrane segment at 15–35 (VSLLLLRVLTGVFLVIALIIL) threads the bilayer. Residues 36–60 (STNSVTIVSQGSALKFHFKDVYAYR) are Extracellular-facing. A helical membrane pass occupies residues 61–81 (YMLSAAVIGLLYAVIQLFFTI). Residues 82–150 (SEFATGMKNP…FFSRGYASAS (69 aa)) are Cytoplasmic-facing. The chain crosses the membrane as a helical span at residues 151-171 (LLLFSFICLAVLSVFSSLAIA). The Extracellular portion of the chain corresponds to 172 to 174 (KRN).

It belongs to the Casparian strip membrane proteins (CASP) family. In terms of assembly, homodimer and heterodimers.

It localises to the cell membrane. In Arabidopsis lyrata subsp. lyrata (Lyre-leaved rock-cress), this protein is CASP-like protein 4D2.